The sequence spans 332 residues: Ketol-acid reductoisomerase (NADP(+)) (332 aa).

In terms of domain architecture, KARI N-terminal Rossmann spans 1–182 (MATIYRDKDA…GGTRAGVLET (182 aa)). Residues 25-28 (YGNQ), Lys-49, Ser-51, and 83-86 (DELQ) each bind NADP(+). The active site involves His-108. Gly-134 lines the NADP(+) pocket. In terms of domain architecture, KARI C-terminal knotted spans 183–328 (TFAEETETDL…AELRAMMPWL (146 aa)). Positions 191, 195, 227, and 231 each coordinate Mg(2+). Residue Ser-252 participates in substrate binding.

The protein belongs to the ketol-acid reductoisomerase family. Mg(2+) is required as a cofactor.

The enzyme catalyses (2R)-2,3-dihydroxy-3-methylbutanoate + NADP(+) = (2S)-2-acetolactate + NADPH + H(+). It catalyses the reaction (2R,3R)-2,3-dihydroxy-3-methylpentanoate + NADP(+) = (S)-2-ethyl-2-hydroxy-3-oxobutanoate + NADPH + H(+). It participates in amino-acid biosynthesis; L-isoleucine biosynthesis; L-isoleucine from 2-oxobutanoate: step 2/4. The protein operates within amino-acid biosynthesis; L-valine biosynthesis; L-valine from pyruvate: step 2/4. Involved in the biosynthesis of branched-chain amino acids (BCAA). Catalyzes an alkyl-migration followed by a ketol-acid reduction of (S)-2-acetolactate (S2AL) to yield (R)-2,3-dihydroxy-isovalerate. In the isomerase reaction, S2AL is rearranged via a Mg-dependent methyl migration to produce 3-hydroxy-3-methyl-2-ketobutyrate (HMKB). In the reductase reaction, this 2-ketoacid undergoes a metal-dependent reduction by NADPH to yield (R)-2,3-dihydroxy-isovalerate. This Methanothrix thermoacetophila (strain DSM 6194 / JCM 14653 / NBRC 101360 / PT) (Methanosaeta thermophila) protein is Ketol-acid reductoisomerase (NADP(+)).